Reading from the N-terminus, the 183-residue chain is Protein Syd (183 aa).

This sequence belongs to the Syd family.

It localises to the cell inner membrane. Its function is as follows. Interacts with the SecY protein in vivo. May bind preferentially to an uncomplexed state of SecY, thus functioning either as a chelating agent for excess SecY in the cell or as a regulatory factor that negatively controls the translocase function. This Yersinia pestis bv. Antiqua (strain Antiqua) protein is Protein Syd.